We begin with the raw amino-acid sequence, 251 residues long: Glucosamine-6-phosphate deaminase (251 aa).

Aspartate 73 serves as the catalytic Proton acceptor; for enolization step. The active-site For ring-opening step is the asparagine 142. Catalysis depends on histidine 144, which acts as the Proton acceptor; for ring-opening step. The active-site For ring-opening step is glutamate 149.

This sequence belongs to the glucosamine/galactosamine-6-phosphate isomerase family. NagB subfamily.

It carries out the reaction alpha-D-glucosamine 6-phosphate + H2O = beta-D-fructose 6-phosphate + NH4(+). It functions in the pathway amino-sugar metabolism; N-acetylneuraminate degradation; D-fructose 6-phosphate from N-acetylneuraminate: step 5/5. Functionally, catalyzes the reversible isomerization-deamination of glucosamine 6-phosphate (GlcN6P) to form fructose 6-phosphate (Fru6P) and ammonium ion. In Rhodopirellula baltica (strain DSM 10527 / NCIMB 13988 / SH1), this protein is Glucosamine-6-phosphate deaminase.